Reading from the N-terminus, the 584-residue chain is AP-1-like transcription factor yap1 (584 aa).

Residues 23–179 are disordered; it reads LAALSSNQPP…AFRERKEKHL (157 aa). Positions 35–42 match the Bipartite nuclear localization signal motif; that stretch reads QQNDKQRS. The segment covering 36–48 has biased composition (basic and acidic residues); sequence QNDKQRSQAKTDP. The segment covering 52–67 has biased composition (low complexity); that stretch reads PGNMSSGSFSMSPGFN. A Bipartite nuclear localization signal motif is present at residues 68-75; sequence KTHPGSGG. Over residues 79-94 the composition is skewed to acidic residues; it reads GDDESPFLDFNPELDF. Basic and acidic residues-rich tracts occupy residues 112–144 and 170–179; these read SEEH…DKAA and AFRERKEKHL. Residues 154 to 217 enclose the bZIP domain; that stretch reads SEPTSKRKAQ…ERLQVELREY (64 aa). A basic motif region spans residues 159-180; that stretch reads KRKAQNRAAQRAFRERKEKHLK. The segment at 182–189 is leucine-zipper; the sequence is LETKVDEL. Residues 211-332 are transcription activation 1; the sequence is QVELREYRKR…PSPKVPSVYN (122 aa). 2 disordered regions span residues 267-379 and 418-441; these read IFNG…TKLN and RGKS…TPGP. A n-CRD region spans residues 284-296; that stretch reads SSPATSDSQVPGV. A compositionally biased stretch (polar residues) spans 300–309; the sequence is ETLNGSNNRG. Low complexity predominate over residues 336-362; it reads SASSHDSSNSCSPSSSSDSHQSQMLSS. Composition is skewed to polar residues over residues 363-379 and 422-437; these read NGTS…TKLN and ESVS…NYEQ. Residues 377–480 form a transcription activation 2 region; the sequence is KLNDSVQNHH…SQDFGTFFDD (104 aa). 3 cysteine pairs are disulfide-bonded: Cys-531-Cys-555, Cys-531-Cys-564, and Cys-555-Cys-564. Residues 531-564 are c-CRD; the sequence is CTKIWDRLQSMEKFRNGEIDVDNLCSELRTKARC. Residues 549–556 carry the Nuclear export signal motif; that stretch reads IDVDNLCS.

Belongs to the bZIP family. YAP subfamily. Post-translationally, depending on the oxidative stress inducing agent, yap1 can undergo two distinct conformational changes, both involving disulfide bond formation, and both masking the nuclear export signal, thus abolishing nuclear export.

It localises to the nucleus. Its subcellular location is the cytoplasm. Transcription activator involved in oxidative stress response and redox homeostasis. Regulates the transcription of genes encoding antioxidant enzymes and components of the cellular thiol-reducing pathways. May be involved in antifungal resistance to voriconazole. This Aspergillus flavus (strain ATCC 200026 / FGSC A1120 / IAM 13836 / NRRL 3357 / JCM 12722 / SRRC 167) protein is AP-1-like transcription factor yap1.